A 484-amino-acid chain; its full sequence is L-amino-acid oxidase (484 aa).

A disulfide bond links C8 and C171. FAD is bound by residues M41–S42, E61–A62, and R69. H73 provides a ligand contact to Zn(2+). G85 to R88 contacts FAD. Residue R88 participates in substrate binding. The N-linked (GlcNAc...) asparagine glycan is linked to N170. Residue H221 coordinates substrate. V259 contributes to the FAD binding site. E277 contacts Zn(2+). C329 and C410 are disulfide-bonded. Y370 contacts substrate. FAD contacts are provided by residues E455 and G462–T467. Residue G462–W463 coordinates substrate.

It belongs to the flavin monoamine oxidase family. FIG1 subfamily. In terms of assembly, homodimer; non-covalently linked. It depends on FAD as a cofactor. In terms of tissue distribution, expressed by the venom gland.

The protein localises to the secreted. The enzyme catalyses an L-alpha-amino acid + O2 + H2O = a 2-oxocarboxylate + H2O2 + NH4(+). In terms of biological role, catalyzes an oxidative deamination of predominantly hydrophobic and aromatic L-amino acids, thus producing hydrogen peroxide that may contribute to the diverse toxic effects of this enzyme. Exhibits diverse biological activities, such as hemorrhage, hemolysis, edema, apoptosis of vascular endothelial cells or tumor cell lines, antibacterial and antiparasitic activities, as well as regulation of platelet aggregation. Effects of snake L-amino oxidases on platelets are controversial, since they either induce aggregation or inhibit agonist-induced aggregation. These different effects are probably due to different experimental conditions. This Vipera ammodytes ammodytes (Western sand viper) protein is L-amino-acid oxidase.